Consider the following 644-residue polypeptide: Threonine--tRNA ligase (644 aa).

The 62-residue stretch at 1 to 62 (MSFSITLPDG…DSDSEVAIIT (62 aa)) folds into the TGS domain. The catalytic stretch occupies residues 240-538 (DHRTIGRDLD…LTEIYKGAFP (299 aa)). The Zn(2+) site is built by Cys-334, His-385, and His-515.

It belongs to the class-II aminoacyl-tRNA synthetase family. As to quaternary structure, homodimer. Zn(2+) serves as cofactor.

It localises to the cytoplasm. The catalysed reaction is tRNA(Thr) + L-threonine + ATP = L-threonyl-tRNA(Thr) + AMP + diphosphate + H(+). In terms of biological role, catalyzes the attachment of threonine to tRNA(Thr) in a two-step reaction: L-threonine is first activated by ATP to form Thr-AMP and then transferred to the acceptor end of tRNA(Thr). Also edits incorrectly charged L-seryl-tRNA(Thr). The chain is Threonine--tRNA ligase from Lactobacillus helveticus (strain DPC 4571).